The chain runs to 167 residues: tRNA-specific adenosine deaminase (167 aa).

The CMP/dCMP-type deaminase domain maps to 6–117; sequence FSHEYWMRHA…DAKTGAAGSL (112 aa). Residue His57 coordinates Zn(2+). Catalysis depends on Glu59, which acts as the Proton donor. Residues Cys87 and Cys90 each contribute to the Zn(2+) site.

The protein belongs to the cytidine and deoxycytidylate deaminase family. As to quaternary structure, homodimer. Requires Zn(2+) as cofactor.

The catalysed reaction is adenosine(34) in tRNA + H2O + H(+) = inosine(34) in tRNA + NH4(+). In terms of biological role, catalyzes the deamination of adenosine to inosine at the wobble position 34 of tRNA(Arg2). Essential for cell viability. The polypeptide is tRNA-specific adenosine deaminase (Escherichia coli (strain K12)).